Consider the following 175-residue polypeptide: Alkyl hydroperoxide reductase AhpD (175 aa).

The Proton donor role is filled by Cys-130. A disulfide bridge connects residues Cys-130 and Cys-133. Cys-133 functions as the Cysteine sulfenic acid (-SOH) intermediate in the catalytic mechanism.

This sequence belongs to the AhpD family. As to quaternary structure, homotrimer.

The catalysed reaction is N(6)-[(R)-dihydrolipoyl]-L-lysyl-[lipoyl-carrier protein] + a hydroperoxide = N(6)-[(R)-lipoyl]-L-lysyl-[lipoyl-carrier protein] + an alcohol + H2O. Functionally, antioxidant protein with alkyl hydroperoxidase activity. Required for the reduction of the AhpC active site cysteine residues and for the regeneration of the AhpC enzyme activity. This Mycobacteroides abscessus (strain ATCC 19977 / DSM 44196 / CCUG 20993 / CIP 104536 / JCM 13569 / NCTC 13031 / TMC 1543 / L948) (Mycobacterium abscessus) protein is Alkyl hydroperoxide reductase AhpD.